The chain runs to 304 residues: Negative regulator of the PHO system (304 aa).

The region spanning 7–297 is the Protein kinase domain; that stretch reads FKQLEKVGNG…AKDALNHPWF (291 aa). ATP-binding positions include 13 to 21 and K36; that span reads VGNGTYATV. The active-site Proton acceptor is the D133.

Belongs to the protein kinase superfamily. CMGC Ser/Thr protein kinase family. CDC2/CDKX subfamily. In terms of assembly, interacts with a number of cyclins.

It catalyses the reaction L-seryl-[protein] + ATP = O-phospho-L-seryl-[protein] + ADP + H(+). The catalysed reaction is L-threonyl-[protein] + ATP = O-phospho-L-threonyl-[protein] + ADP + H(+). Functionally, when phosphate concentrations are high it phosphorylates the PHO4 transcription factor thus establishing repression. This chain is Negative regulator of the PHO system (PHO85), found in Kluyveromyces lactis (strain ATCC 8585 / CBS 2359 / DSM 70799 / NBRC 1267 / NRRL Y-1140 / WM37) (Yeast).